The chain runs to 361 residues: Protein C42 (361 aa).

The tract at residues 32–36 is LXCXE motif; that stretch reads LLCDE. The Nuclear localization signal motif lies at 357 to 360; sequence KRKK.

Belongs to the baculoviridae C42 protein family. In terms of assembly, forms a complex with proteins E27 and p78/83. The interaction with p78/83 mediates nuclear translocation of P78/83. Interacts with protein Ac102. Interacts with IE0.

It is found in the host nucleus. It localises to the virion. Plays a role in host nuclear actin polymerization by recruiting p78/73 protein that is capable of activating an actin-related protein 2/3 complex to initiate nuclear actin polymerization. The polypeptide is Protein C42 (Lepidoptera (butterflies and moths)).